The following is a 33-amino-acid chain: Kappa-theraphotoxin-Pg2a (33 aa).

3 disulfide bridges follow: Cys2–Cys16, Cys9–Cys21, and Cys15–Cys28.

In terms of tissue distribution, expressed by the venom gland.

The protein resides in the secreted. In terms of biological role, gating modifier of Kv2.1/KCNB1 channels. In Chilobrachys guangxiensis (Chinese earth tiger tarantula), this protein is Kappa-theraphotoxin-Pg2a.